We begin with the raw amino-acid sequence, 425 residues long: CinA-like protein (425 aa).

It belongs to the CinA family.

This chain is CinA-like protein, found in Mycobacterium marinum (strain ATCC BAA-535 / M).